We begin with the raw amino-acid sequence, 510 residues long: Protein fork head (510 aa).

Disordered stretches follow at residues 1 to 62 (MQKL…SPLA) and 175 to 205 (AMPP…YRRS). Residues 20–39 (SGGGGPPSGGGGGGGGGGGG) are compositionally biased toward gly residues. A compositionally biased stretch (low complexity) spans 47–60 (NNPNPTSNGGSMSP). Serine 187 and serine 190 each carry phosphoserine. The fork-head DNA-binding region spans 209 to 300 (AKPPYSYISL…GNMFENGCYL (92 aa)). Positions 309 to 359 (EKKEAIRQLHKSPSHSSLEATSPGKKDHEDSHHMHHHHHSRLDHHQHHKEA) are disordered. 3 positions are modified to phosphoserine: serine 320, serine 322, and serine 330. A compositionally biased stretch (basic residues) spans 341–356 (HMHHHHHSRLDHHQHH).

Its subcellular location is the nucleus. Fkh promotes terminal as opposed to segmental development. In the absence of fkh, this developmental switch does not occur. The nuclear localization of the fkh protein suggest that fkh regulates the transcription of other, subordinate, genes. This Drosophila melanogaster (Fruit fly) protein is Protein fork head (fkh).